The chain runs to 69 residues: Beta-defensin 114 (69 aa).

The N-terminal stretch at 1-26 is a signal peptide; the sequence is MRIFYYLHFLCYVTFILPATCTLVNA. Disulfide bonds link Cys-29-Cys-57, Cys-36-Cys-50, and Cys-40-Cys-58.

It belongs to the beta-defensin family. Expressed in epididymis, predominantly in the caput (at protein level).

The protein localises to the secreted. In terms of biological role, has a salt-sensitive antimicrobial activity against Gram-negative bacteria, including E.coli, Gram-positive, including S.aureus, and fungi, including C.albicans. Binds to and neutralizes bacterial lipopolysaccharides (LPS), abolishing TNF production by macrophages challenged with LPS. Rescues the LPS-induced reduction of sperm motility in vitro and may protect from LPS-induced lethality. The chain is Beta-defensin 114 (DEFB114) from Homo sapiens (Human).